Reading from the N-terminus, the 664-residue chain is Intraflagellar transport protein 70B (664 aa).

TPR repeat units follow at residues 11–44 (DGEF…SPRS), 45–78 (RAGL…HPEL), 153–186 (LDGQ…SGYR), 188–220 (DLSY…GIRQ), 385–418 (LTEQ…YEDT), 423–456 (IPVL…CNDH), and 458–491 (VWKL…HYDN). Residues 509–532 (MISQNEEAEELMRKIGKEEEQLSY) are a coiled coil. The stretch at 543-576 (CIVNLVIGTLYCAKGNYDFGISRVIKSLEPCNKK) is one TPR 8 repeat.

This sequence belongs to the TTC30/dfy-1/fleer family. As to quaternary structure, interacts with the IFT B complex components IFT27, IFT46, IFT74, IFT52, IFT57, IFT80, IFT81 and IFT88. Interacts with KIF17.

It is found in the cell projection. It localises to the cilium. Functionally, required for polyglutamylation of axonemal tubulin. Plays a role in anterograde intraflagellar transport (IFT), the process by which cilia precursors are transported from the base of the cilium to the site of their incorporation at the tip. This chain is Intraflagellar transport protein 70B (IFT70B), found in Bos taurus (Bovine).